A 135-amino-acid polypeptide reads, in one-letter code: Protein PsiE homolog (135 aa).

4 helical membrane-spanning segments follow: residues 14 to 34, 54 to 74, 82 to 102, and 107 to 127; these read LQTILNIGLLVLATILVIFLV, YQLIEGIVIYFLYFEFIALIV, HFPLRYFIYIGITAIIRLIIV, and PSDTLMYSAAILLLVVTLYLA.

Belongs to the PsiE family.

Its subcellular location is the cell inner membrane. This is Protein PsiE homolog from Pectobacterium carotovorum subsp. carotovorum (strain PC1).